The following is a 218-amino-acid chain: Small ribosomal subunit protein mS34 (218 aa).

Residues 178–218 (RQKNGDPSTEEPMLSLERIRTDPWDYPENQEAKKKTKGTAV) form a disordered region.

Belongs to the mitochondrion-specific ribosomal protein mS34 family. As to quaternary structure, component of the mitochondrial ribosome small subunit (28S) which comprises a 12S rRNA and about 30 distinct proteins.

The protein localises to the mitochondrion. In terms of biological role, required for mitochondrial translation, plays a role in maintaining the stability of the small ribosomal subunit and the 12S rRNA that are required for mitoribosome formation. This Bos taurus (Bovine) protein is Small ribosomal subunit protein mS34.